Here is a 79-residue protein sequence, read N- to C-terminus: Toxin ICK-20 (79 aa).

The signal sequence occupies residues 1–20 (MMKYFLVLCLVVLGVAAVQA). Cystine bridges form between Cys-43–Cys-57, Cys-50–Cys-61, Cys-56–Cys-78, and Cys-68–Cys-74. Asn-71 is a glycosylation site (N-linked (GlcNAc...) asparagine).

Belongs to the neurotoxin 13 (insecticidal toxin ABC) family. ICK-21 subfamily. Expressed by the venom gland.

It is found in the secreted. Ion channel inhibitor. In Trittame loki (Brush-footed trapdoor spider), this protein is Toxin ICK-20.